Reading from the N-terminus, the 293-residue chain is Xyloglucan endotransglucosylase/hydrolase protein 31 (293 aa).

A signal peptide spans methionine 1 to serine 20. In terms of domain architecture, GH16 spans tyrosine 29–tyrosine 230. Residue glutamate 114 is the Nucleophile of the active site. Glutamate 118 functions as the Proton donor in the catalytic mechanism. Xyloglucan-binding positions include glutamate 118, glutamine 131–asparagine 133, aspartate 141–glutamate 148, and aspartate 209–tryptophan 210. Intrachain disulfides connect cysteine 238–cysteine 246 and cysteine 280–cysteine 293. Arginine 285 is a xyloglucan binding site.

It belongs to the glycosyl hydrolase 16 family. XTH group 3 subfamily. As to quaternary structure, interacts with XTH17. The formation of an XTH17-XTH31 dimer may be required for XET activity. In terms of processing, contains at least one intrachain disulfide bond essential for its enzymatic activity. In terms of tissue distribution, predominantly expressed in root. Weakly expressed in influorescence stems. Expressed in root tips and elongation zones, stems, young leaves, flowers and siliques. Expressed in root, hypocotyl, and etiolated whole seedlings.

The protein resides in the secreted. Its subcellular location is the cell wall. The protein localises to the extracellular space. It is found in the apoplast. It localises to the cell membrane. The enzyme catalyses breaks a beta-(1-&gt;4) bond in the backbone of a xyloglucan and transfers the xyloglucanyl segment on to O-4 of the non-reducing terminal glucose residue of an acceptor, which can be a xyloglucan or an oligosaccharide of xyloglucan.. The catalysed reaction is xyloglucan + H2O = xyloglucan oligosaccharides.. Its function is as follows. Catalyzes xyloglucan endohydrolysis (XEH) and/or endotransglycosylation (XET). Cleaves and religates xyloglucan polymers, an essential constituent of the primary cell wall, and thereby participates in cell wall construction of growing tissues. Involved in the accumulation of hemicelluloses. Has a high XEH activity and only a slight XET activity in vitro, but the main in planta activity seems to be XET, thus controlling aluminum sensitivity. Acceptor preferences are XXXGol = XXFGol &gt; XXLGol &gt; XLLGol = XLFGol. This is Xyloglucan endotransglucosylase/hydrolase protein 31 from Arabidopsis thaliana (Mouse-ear cress).